Reading from the N-terminus, the 72-residue chain is Toxin Acra II-2 (72 aa).

Residues 3–67 form the LCN-type CS-alpha/beta domain; sequence VPGNYPLNTN…VWNAAKNYCK (65 aa). Intrachain disulfides connect C18–C41, C27–C46, and C31–C48.

The protein belongs to the long (3 C-C) scorpion toxin superfamily. Sodium channel inhibitor family. Beta subfamily. As to expression, expressed by the venom gland.

Its subcellular location is the secreted. In terms of biological role, binds to sodium channels (Nav) and affects the channel activation process. This Androctonus crassicauda (Arabian fat-tailed scorpion) protein is Toxin Acra II-2.